An 81-amino-acid chain; its full sequence is UPF0248 protein TK0315 (81 aa).

This sequence belongs to the UPF0248 family.

The polypeptide is UPF0248 protein TK0315 (Thermococcus kodakarensis (strain ATCC BAA-918 / JCM 12380 / KOD1) (Pyrococcus kodakaraensis (strain KOD1))).